The following is a 211-amino-acid chain: Methylthioribulose-1-phosphate dehydratase (211 aa).

Zn(2+)-binding residues include histidine 105 and histidine 107.

Belongs to the aldolase class II family. MtnB subfamily. Zn(2+) is required as a cofactor.

The enzyme catalyses 5-(methylsulfanyl)-D-ribulose 1-phosphate = 5-methylsulfanyl-2,3-dioxopentyl phosphate + H2O. It functions in the pathway amino-acid biosynthesis; L-methionine biosynthesis via salvage pathway; L-methionine from S-methyl-5-thio-alpha-D-ribose 1-phosphate: step 2/6. Functionally, catalyzes the dehydration of methylthioribulose-1-phosphate (MTRu-1-P) into 2,3-diketo-5-methylthiopentyl-1-phosphate (DK-MTP-1-P). The sequence is that of Methylthioribulose-1-phosphate dehydratase from Acidiphilium cryptum (strain JF-5).